The chain runs to 210 residues: Protein SgcE (210 aa).

A substrate-binding site is contributed by serine 6. Residues histidine 31, aspartate 33, and histidine 64 each contribute to the a divalent metal cation site. The Proton acceptor role is filled by aspartate 33. Substrate-binding positions include histidine 64, 140 to 143 (DGQG), 169 to 171 (DGG), and 191 to 192 (GR). Aspartate 169 is an a divalent metal cation binding site. Aspartate 169 serves as the catalytic Proton donor.

The protein belongs to the ribulose-phosphate 3-epimerase family. It depends on Co(2+) as a cofactor. Fe(2+) serves as cofactor. Requires Mn(2+) as cofactor. The cofactor is Zn(2+).

Its pathway is carbohydrate degradation. Functionally, probable pentose-5-phosphate 3-epimerase. This is Protein SgcE (sgcE) from Escherichia coli (strain K12).